The primary structure comprises 330 residues: tRNA (guanine(37)-N(1))-methyltransferase Trm5b (330 aa).

S-adenosyl-L-methionine contacts are provided by residues Arg173, 211-212 (DI), 238-239 (DS), and Asn252.

It belongs to the class I-like SAM-binding methyltransferase superfamily. TRM5/TYW2 family.

The protein localises to the cytoplasm. It catalyses the reaction guanosine(37) in tRNA + S-adenosyl-L-methionine = N(1)-methylguanosine(37) in tRNA + S-adenosyl-L-homocysteine + H(+). Its function is as follows. Specifically methylates the N1 position of guanosine-37 in various tRNAs. In Pyrococcus abyssi (strain GE5 / Orsay), this protein is tRNA (guanine(37)-N(1))-methyltransferase Trm5b.